A 313-amino-acid polypeptide reads, in one-letter code: Proline iminopeptidase (313 aa).

Residues 35–298 (KPVVILHGGP…TPGAGHSAFE (264 aa)) enclose the AB hydrolase-1 domain. Catalysis depends on Ser110, which acts as the Nucleophile. Asp266 is a catalytic residue. Residue His294 is the Proton donor of the active site.

The protein belongs to the peptidase S33 family.

It localises to the cytoplasm. The enzyme catalyses Release of N-terminal proline from a peptide.. Specifically catalyzes the removal of N-terminal proline residues from peptides. In Xylella fastidiosa (strain Temecula1 / ATCC 700964), this protein is Proline iminopeptidase (pip).